The following is a 1315-amino-acid chain: Activating molecule in BECN1-regulated autophagy protein 1A (1315 aa).

WD repeat units follow at residues 50–89 (DSPRSTFLLAFSPDRSLMASTHVNHNIYITEVKSGKCVHS), 92–132 (GHRR…ESWL), and 134–174 (ESNS…TVVK). 10 disordered regions span residues 294–322 (RVPSPPDEDPSDSASLEAQAHTFSSARTE), 342–409 (FSSV…QRTG), 426–463 (FQSPVYTSASDRWGSTPGTSSSRHRPPEEEGQSSSSSI), 502–526 (NNNMDPEQPGPSHYQSPYSGENPPH), 545–610 (SRRW…DTGQ), 630–660 (VYRQSASSRSANISQGALNQEMPEDTPDNDY), 681–736 (RDSV…PRNA), 985–1134 (HSDG…STGQ), 1181–1208 (GSQTGADAQNRTRLSPIPGPSSGAPESL), and 1286–1315 (LLSSSPSLSPVNNSNYSNSDSSYLGDEYGR). The span at 351-360 (NMRNHSSSSG) shows a compositional bias: polar residues. Residues 378–388 (PGREGGGRHPG) are compositionally biased toward basic and acidic residues. 2 stretches are compositionally biased toward polar residues: residues 394 to 409 (SGLNGQSSSMTPQRTG) and 426 to 435 (FQSPVYTSAS). 2 stretches are compositionally biased toward polar residues: residues 552-581 (GQPSSTERNTPWQPSSSAFHSVAPVSQSNE) and 633-647 (QSASSRSANISQGAL). A compositionally biased stretch (low complexity) spans 696 to 715 (RPLSSNPSSLSPSPVPNAES). Acidic residues predominate over residues 716-725 (SEVDFEEFEE). A compositionally biased stretch (low complexity) spans 1009–1021 (PSSSRSGDRAGSS). Positions 1022-1031 (RTDRRSRRDI) are enriched in basic and acidic residues. Polar residues predominate over residues 1047–1060 (SVTSQGTQTQNQRL). 2 short sequence motifs (TQT motif) span residues 1053 to 1055 (TQT) and 1065 to 1067 (TQT). Over residues 1061-1072 (QHAETQTDRDLP) the composition is skewed to basic and acidic residues. Over residues 1076–1090 (QQPSTSQGSQVTDAT) the composition is skewed to polar residues. Residues 1091–1103 (ESLDFETLPEDSG) show a composition bias toward acidic residues. 2 stretches are compositionally biased toward polar residues: residues 1125–1134 (SEPSTDSTGQ) and 1181–1193 (GSQTGADAQNRTR). Over residues 1286-1307 (LLSSSPSLSPVNNSNYSNSDSS) the composition is skewed to low complexity.

This sequence belongs to the WD repeat AMBRA1 family. As to quaternary structure, component of the DCX(AMBRA1) E3 ubiquitin ligase complex.

Its subcellular location is the endoplasmic reticulum. The protein localises to the cytoplasm. The protein resides in the cytoskeleton. It localises to the cytoplasmic vesicle. It is found in the autophagosome. Its subcellular location is the mitochondrion. The protein localises to the cytosol. The protein resides in the nucleus. It localises to the cell junction. It is found in the focal adhesion. Its pathway is protein modification; protein ubiquitination. Functionally, substrate-recognition component of a DCX (DDB1-CUL4-X-box) E3 ubiquitin-protein ligase complex involved in cell cycle control and autophagy. The DCX(AMBRA1) complex specifically mediates the polyubiquitination of target proteins. Acts as an upstream master regulator of the transition from G1 to S cell phase: ambra1a specifically recognizes and binds phosphorylated cyclin-D (ccnd1, ccnd2 and ccnd3), leading to cyclin-D ubiquitination by the DCX(AMBRA1) complex and subsequent degradation. Acts as a regulator of Cul5-RING (CRL5) E3 ubiquitin-protein ligase complexes by mediating ubiquitination and degradation of Elongin-C (eloc) component of CRL5 complexes. Acts as a key regulator of autophagy by modulating the BECN1-PIK3C3 complex: controls protein turnover during neuronal development, and regulates normal cell survival and proliferation. In normal conditions, ambra1a is tethered to the cytoskeleton via interaction with dyneins light chains. Upon autophagy induction, ambra1a is released from the cytoskeletal docking site to induce autophagosome nucleation by mediating ubiquitination of proteins involved in autophagy. Also acts as an activator of mitophagy. Required for skeletal muscle development. This chain is Activating molecule in BECN1-regulated autophagy protein 1A, found in Danio rerio (Zebrafish).